The chain runs to 112 residues: ATP synthase subunit c (112 aa).

2 helical membrane-spanning segments follow: residues 36 to 56 (FSVL…AIGM) and 81 to 101 (MFIA…IALI).

Belongs to the ATPase C chain family. As to quaternary structure, F-type ATPases have 2 components, F(1) - the catalytic core - and F(0) - the membrane proton channel. F(1) has five subunits: alpha(3), beta(3), gamma(1), delta(1), epsilon(1). F(0) has three main subunits: a(1), b(2) and c(10-14). The alpha and beta chains form an alternating ring which encloses part of the gamma chain. F(1) is attached to F(0) by a central stalk formed by the gamma and epsilon chains, while a peripheral stalk is formed by the delta and b chains.

The protein resides in the cell inner membrane. Its function is as follows. F(1)F(0) ATP synthase produces ATP from ADP in the presence of a proton or sodium gradient. F-type ATPases consist of two structural domains, F(1) containing the extramembraneous catalytic core and F(0) containing the membrane proton channel, linked together by a central stalk and a peripheral stalk. During catalysis, ATP synthesis in the catalytic domain of F(1) is coupled via a rotary mechanism of the central stalk subunits to proton translocation. Functionally, key component of the F(0) channel; it plays a direct role in translocation across the membrane. A homomeric c-ring of between 10-14 subunits forms the central stalk rotor element with the F(1) delta and epsilon subunits. The chain is ATP synthase subunit c from Campylobacter jejuni subsp. jejuni serotype O:6 (strain 81116 / NCTC 11828).